A 124-amino-acid polypeptide reads, in one-letter code: Small ribosomal subunit protein bS16 (124 aa).

Positions Glu84 to Arg110 are enriched in basic and acidic residues. The interval Glu84–Glu124 is disordered. Residues Glu111–Glu124 show a composition bias toward low complexity.

The protein belongs to the bacterial ribosomal protein bS16 family.

The protein is Small ribosomal subunit protein bS16 of Paracoccus denitrificans (strain Pd 1222).